The primary structure comprises 74 residues: RNA-binding protein Hfq (74 aa).

A Sm domain is found at D9 to V69.

The protein belongs to the Hfq family. As to quaternary structure, homohexamer.

RNA chaperone that binds small regulatory RNA (sRNAs) and mRNAs to facilitate mRNA translational regulation in response to envelope stress, environmental stress and changes in metabolite concentrations. Also binds with high specificity to tRNAs. The polypeptide is RNA-binding protein Hfq (Anoxybacillus flavithermus (strain DSM 21510 / WK1)).